We begin with the raw amino-acid sequence, 425 residues long: UDP-N-acetylglucosamine 1-carboxyvinyltransferase (425 aa).

23 to 24 provides a ligand contact to phosphoenolpyruvate; it reads KN. Arg-100 is a binding site for UDP-N-acetyl-alpha-D-glucosamine. Cys-124 (proton donor) is an active-site residue. Cys-124 is modified (2-(S-cysteinyl)pyruvic acid O-phosphothioketal). UDP-N-acetyl-alpha-D-glucosamine is bound by residues Asp-313 and Ile-335.

This sequence belongs to the EPSP synthase family. MurA subfamily.

The protein resides in the cytoplasm. The enzyme catalyses phosphoenolpyruvate + UDP-N-acetyl-alpha-D-glucosamine = UDP-N-acetyl-3-O-(1-carboxyvinyl)-alpha-D-glucosamine + phosphate. The protein operates within cell wall biogenesis; peptidoglycan biosynthesis. Functionally, cell wall formation. Adds enolpyruvyl to UDP-N-acetylglucosamine. The sequence is that of UDP-N-acetylglucosamine 1-carboxyvinyltransferase from Wolbachia pipientis wMel.